Consider the following 264-residue polypeptide: Exodeoxyribonuclease YycJ (264 aa).

A divalent metal cation contacts are provided by histidine 58, histidine 60, aspartate 62, histidine 63, and aspartate 145.

This sequence belongs to the metallo-beta-lactamase superfamily. Fe(2+) serves as cofactor. Zn(2+) is required as a cofactor. It depends on Mn(2+) as a cofactor.

In terms of biological role, 5'-&gt;3' double-stranded DNA exonuclease. May play a role in mutation mismatch repair (MMR). Required for accurate coordination of cell division with DNA replication. May play a role in cell wall metabolism. In Bacillus anthracis, this protein is Exodeoxyribonuclease YycJ.